Here is a 282-residue protein sequence, read N- to C-terminus: Insulin-like growth factor-binding protein 7 (282 aa).

Positions 1–26 are cleaved as a signal peptide; sequence MERPSLRALLLGAAGLLLLLLPLSSS. Residues 28 to 114 enclose the IGFBP N-terminal domain; that stretch reads SSDTCGPCEP…PGVSGVCVCK (87 aa). Intrachain disulfides connect Cys-32–Cys-57, Cys-35–Cys-59, Cys-40–Cys-60, Cys-48–Cys-63, Cys-71–Cys-87, Cys-81–Cys-111, and Cys-120–Cys-156. One can recognise a Kazal-like domain in the interval 105-158; sequence PGVSGVCVCKSRYPVCGSDGTTYPSGCQLRAASQRAESRGEKAITQVSKGTCEQ. One can recognise an Ig-like C2-type domain in the interval 160–264; that stretch reads PSIVTPPKDI…GQASASAKIT (105 aa). Asn-171 carries N-linked (GlcNAc...) asparagine glycosylation. A disulfide bridge connects residues Cys-181 and Cys-248. Phosphoserine; by FAM20C is present on Ser-239.

As to quaternary structure, may interact with VPS24/CHMP3; the relevance of such interaction however remains unclear. Interacts with CD93; this interaction plays a role in endothelial cells angiogenesis. In terms of processing, N-glycosylated.

Its subcellular location is the secreted. In terms of biological role, binds IGF1 and IGF2 with a relatively low affinity. Stimulates prostacyclin (PGI2) production. Stimulates cell adhesion. Acts as a ligand for CD93 to play a role in angiogenesis. In Homo sapiens (Human), this protein is Insulin-like growth factor-binding protein 7 (IGFBP7).